The primary structure comprises 79 residues: uncharacterized protein (79 aa).

The tract at residues Met1–Glu27 is disordered.

This is an uncharacterized protein from Homo sapiens (Human).